The primary structure comprises 488 residues: Katanin p60 ATPase-containing subunit A-like 1 (488 aa).

Positions 84 to 184 (FPNPVPEEGP…EQKKFDGTGY (101 aa)) are disordered. Positions 144–167 (KPDRPNTRDGRGNKAKEEKSKRNA) are enriched in basic and acidic residues. 246-253 (GPPGTGKT) lines the ATP pocket.

It belongs to the AAA ATPase family. Katanin p60 subunit A1 subfamily. A-like 1 sub-subfamily.

Its subcellular location is the cytoplasm. The protein localises to the cytoskeleton. It is found in the spindle pole. It localises to the spindle. It carries out the reaction n ATP + n H2O + a microtubule = n ADP + n phosphate + (n+1) alpha/beta tubulin heterodimers.. Functionally, regulates microtubule dynamics in Sertoli cells, a process that is essential for spermiogenesis and male fertility. Severs microtubules in an ATP-dependent manner, promoting rapid reorganization of cellular microtubule arrays. The polypeptide is Katanin p60 ATPase-containing subunit A-like 1 (katnal1) (Danio rerio (Zebrafish)).